We begin with the raw amino-acid sequence, 377 residues long: [2-(trimethylamino)ethyl]phosphonate dioxygenase (377 aa).

The interval 95–119 is disordered; that stretch reads DTDQSSEVGRTSPDVETWDSSQPAP. Position 187 (Asn187) interacts with [2-(trimethylamino)ethyl]phosphonate. His198 lines the 2-oxoglutarate pocket. Fe(2+)-binding residues include His198 and Asp200. Residues Asp200, Asn201, Tyr203, Asn286, and Arg288 each coordinate [2-(trimethylamino)ethyl]phosphonate. 2-oxoglutarate-binding residues include His341, Arg343, and Arg352. His341 contributes to the Fe(2+) binding site.

Belongs to the gamma-BBH/TMLD family. As to quaternary structure, homodimer. Fe(2+) serves as cofactor. It depends on L-ascorbate as a cofactor.

The enzyme catalyses [2-(trimethylamino)ethyl]phosphonate + 2-oxoglutarate + O2 = [(1R)-1-hydroxy-2-(trimethylamino)ethyl]phosphonate + succinate + CO2. Involved in the degradation of the naturally occurring organophosphonate 2-(trimethylammonio)ethylphosphonate (TMAEP). Catalyzes the hydroxylation of TMAEP to (R)-1-hydroxy-2-(trimethylammonio)ethylphosphonate (OH-TMAEP). Is highly specific for its N-trimethylated substrate. Cannot use gamma-butyrobetaine as substrate. The chain is [2-(trimethylamino)ethyl]phosphonate dioxygenase from Leisingera caerulea (Phaeobacter caeruleus).